Here is a 793-residue protein sequence, read N- to C-terminus: Signal transducer and activator of transcription 5A (793 aa).

Tyr90 is modified (phosphotyrosine). Ser128 is modified (phosphoserine). Residues 589-686 form the SH2 domain; sequence WNDGAILGFV…EVFAKYYTPV (98 aa). Tyr682 carries the phosphotyrosine modification. A Phosphotyrosine; by JAK2 modification is found at Tyr694. The interval 772 to 793 is disordered; that stretch reads DSLDPRLSPPAGLFTSARSSLS. Ser779 is modified (phosphoserine).

This sequence belongs to the transcription factor STAT family. Forms a homodimer or a heterodimer with a related family member. Binds NR3C1. Interacts with NCOA1 and SOCS7. Interacts with ERBB4. Interacts with EBF4. In terms of processing, ISGylated. Tyrosine phosphorylated in response to KITLG/SCF, IL2, IL3, IL7, IL15, CSF2/GMCSF, GH1, PRL, EPO and THPO. Activated KIT promotes phosphorylation on tyrosine residues and subsequent translocation to the nucleus. Tyrosine phosphorylated in response to constitutively activated FGFR1, FGFR2, FGFR3 and FGFR4. Tyrosine phosphorylation is required for DNA-binding activity and dimerization. Serine phosphorylation is also required for maximal transcriptional activity. Tyrosine phosphorylated in response to signaling via activated FLT3; wild-type FLT3 results in much weaker phosphorylation than constitutively activated mutant FLT3. Alternatively, can be phosphorylated by JAK2 at Tyr-694. In terms of tissue distribution, expressed in heart, lung, and weakly in muscle.

It is found in the cytoplasm. Its subcellular location is the nucleus. Functionally, carries out a dual function: signal transduction and activation of transcription. Mediates cellular responses to the cytokine KITLG/SCF and other growth factors. May mediate cellular responses to activated FGFR1, FGFR2, FGFR3 and FGFR4. Binds to the GAS element and activates PRL-induced transcription. Regulates the expression of milk proteins during lactation. This is Signal transducer and activator of transcription 5A (Stat5a) from Rattus norvegicus (Rat).